A 110-amino-acid chain; its full sequence is U1-lycotoxin-Ls1ii (110 aa).

Residues 1 to 20 (MKFVLLFGVLLVTLFSYSSA) form the signal peptide. A propeptide spanning residues 21 to 44 (EMLDDFDQADEDELLSLIEKEEAR) is cleaved from the precursor. Intrachain disulfides connect Cys-47–Cys-62, Cys-54–Cys-71, Cys-61–Cys-89, and Cys-73–Cys-87.

This sequence belongs to the neurotoxin 19 (CSTX) family. 03 subfamily. As to expression, expressed by the venom gland.

Its subcellular location is the secreted. This Lycosa singoriensis (Wolf spider) protein is U1-lycotoxin-Ls1ii.